Here is a 248-residue protein sequence, read N- to C-terminus: 3-deoxy-manno-octulosonate cytidylyltransferase (248 aa).

It belongs to the KdsB family.

Its subcellular location is the cytoplasm. The enzyme catalyses 3-deoxy-alpha-D-manno-oct-2-ulosonate + CTP = CMP-3-deoxy-beta-D-manno-octulosonate + diphosphate. It participates in nucleotide-sugar biosynthesis; CMP-3-deoxy-D-manno-octulosonate biosynthesis; CMP-3-deoxy-D-manno-octulosonate from 3-deoxy-D-manno-octulosonate and CTP: step 1/1. It functions in the pathway bacterial outer membrane biogenesis; lipopolysaccharide biosynthesis. Its function is as follows. Activates KDO (a required 8-carbon sugar) for incorporation into bacterial lipopolysaccharide in Gram-negative bacteria. This is 3-deoxy-manno-octulosonate cytidylyltransferase from Salmonella paratyphi A (strain ATCC 9150 / SARB42).